Here is a 451-residue protein sequence, read N- to C-terminus: Prenyltransferase anuH (451 aa).

6 residues coordinate dimethylallyl diphosphate: arginine 105, lysine 189, tyrosine 191, lysine 257, tyrosine 259, and tyrosine 422.

The protein belongs to the tryptophan dimethylallyltransferase family.

The enzyme catalyses (8S)-annullatin E + dimethylallyl diphosphate = (8S)-annullatin J + diphosphate. It participates in secondary metabolite biosynthesis. Its function is as follows. Cytochrome P450 monooxygenase; part of the gene cluster that mediates the biosynthesis of annullatin D, an alkylated aromatic polyketide with a fused dihydrobenzofuran lactone ring system that exhibits potent agonistic activities toward the cannabinoid receptors. Within the pathway, anuH uses dimethylallyl diphosphate (DMAPP) to prenylate (8S)-annullatin E to produce (8S)-annullatin J. Geranyl and farnesyl diphosphate are not consumed by anuH for prenylation. 2-hydroxymethyl-3-pentylphenol, without the hydroxyl group at the side chain, is also accepted by anuH, but only with low conversion yield. The annullatin backbone 2-hydroxymethyl-3-pentylphenol is assembled from one acetyl-CoA starter unit and 5 malonyl-CoA elongation units by cooperation of the highly reducing polyketide synthase anuA, the short-chain dehydrogenase anuB and the oxidoreductase anuC, before being hydroxylated at the C-5 alkyl chain by the cytochrome P450 monooxygenase anuE to form (8S)-annullatin E. The prenyltransferase anuH subsequently installs one isoprenyl group at the benzene ring to form (8S)-annullatin J. Enzymatic or nonenzymatic dihydro-benzofuran ring formation between the prenyl and the phenolic hydroxyl groups in (8S)-annullatin J results in two diastereomers (2S,9S)-annullatin H and compound 12. The intermediate (2S,9S)-annullatin H is then converted to (2S,9S)-annullatin D by the FAD-linked oxidoreductase anuG-catalyzed five-member lactone ring formation. The isomer 12 acts as a substrate for the short-chain dehydrogenase anuF and is oxidized to (2R)-annullatin F, which is subsequently acetylated by an acetyltransferase leading to (2R)-annullatin G formation. The remaining enzymes identified within the cluster, anuD, anuI and anuJ, seem not to be involved in annullatin biosynthesis. The protein is Prenyltransferase anuH of Penicillium roqueforti (strain FM164).